Reading from the N-terminus, the 329-residue chain is Phosphate acyltransferase (329 aa).

This sequence belongs to the PlsX family. As to quaternary structure, homodimer. Probably interacts with PlsY.

The protein localises to the cytoplasm. It catalyses the reaction a fatty acyl-[ACP] + phosphate = an acyl phosphate + holo-[ACP]. It functions in the pathway lipid metabolism; phospholipid metabolism. Functionally, catalyzes the reversible formation of acyl-phosphate (acyl-PO(4)) from acyl-[acyl-carrier-protein] (acyl-ACP). This enzyme utilizes acyl-ACP as fatty acyl donor, but not acyl-CoA. The sequence is that of Phosphate acyltransferase from Geobacillus sp. (strain WCH70).